A 107-amino-acid polypeptide reads, in one-letter code: Nucleoid-associated protein Hhal_0231 (107 aa).

2 disordered regions span residues 1–24 (MKGG…KAQE) and 82–107 (VQRE…KLPF). The segment covering 15–24 (MQEDMQKAQE) has biased composition (basic and acidic residues).

It belongs to the YbaB/EbfC family. In terms of assembly, homodimer.

The protein resides in the cytoplasm. The protein localises to the nucleoid. In terms of biological role, binds to DNA and alters its conformation. May be involved in regulation of gene expression, nucleoid organization and DNA protection. In Halorhodospira halophila (strain DSM 244 / SL1) (Ectothiorhodospira halophila (strain DSM 244 / SL1)), this protein is Nucleoid-associated protein Hhal_0231.